The following is a 449-amino-acid chain: UDP-N-acetylmuramoylalanine--D-glutamate ligase (449 aa).

118 to 124 serves as a coordination point for ATP; the sequence is GSNGKTT.

This sequence belongs to the MurCDEF family.

It localises to the cytoplasm. The enzyme catalyses UDP-N-acetyl-alpha-D-muramoyl-L-alanine + D-glutamate + ATP = UDP-N-acetyl-alpha-D-muramoyl-L-alanyl-D-glutamate + ADP + phosphate + H(+). It participates in cell wall biogenesis; peptidoglycan biosynthesis. In terms of biological role, cell wall formation. Catalyzes the addition of glutamate to the nucleotide precursor UDP-N-acetylmuramoyl-L-alanine (UMA). This Leuconostoc citreum (strain KM20) protein is UDP-N-acetylmuramoylalanine--D-glutamate ligase.